The chain runs to 324 residues: Homoserine kinase (324 aa).

Proline 100–alanine 110 is a binding site for ATP.

This sequence belongs to the GHMP kinase family. Homoserine kinase subfamily.

The protein resides in the cytoplasm. It catalyses the reaction L-homoserine + ATP = O-phospho-L-homoserine + ADP + H(+). It functions in the pathway amino-acid biosynthesis; L-threonine biosynthesis; L-threonine from L-aspartate: step 4/5. Catalyzes the ATP-dependent phosphorylation of L-homoserine to L-homoserine phosphate. The chain is Homoserine kinase from Chlorobaculum tepidum (strain ATCC 49652 / DSM 12025 / NBRC 103806 / TLS) (Chlorobium tepidum).